Consider the following 118-residue polypeptide: Mating-type P-specific polypeptide Pc (118 aa).

The segment at residues 29 to 97 (KTTIYKNGFM…VRRQIAKLER (69 aa)) is a DNA-binding region (HMG box).

The protein localises to the nucleus. Its function is as follows. Mating type proteins are sequence specific DNA-binding proteins that act as master switches in yeast differentiation by controlling gene expression in a cell type-specific fashion. Required for conjugation and efficient meiosis. This Schizosaccharomyces pombe (Fission yeast) protein is Mating-type P-specific polypeptide Pc (mat2-Pc).